The chain runs to 611 residues: Dihydroxy-acid dehydratase (611 aa).

Residue Asp81 coordinates Mg(2+). Cys122 is a binding site for [2Fe-2S] cluster. Asp123 and Lys124 together coordinate Mg(2+). Lys124 carries the N6-carboxylysine modification. Residue Cys195 participates in [2Fe-2S] cluster binding. Mg(2+) is bound at residue Glu491. The active-site Proton acceptor is the Ser517.

This sequence belongs to the IlvD/Edd family. As to quaternary structure, homodimer. It depends on [2Fe-2S] cluster as a cofactor. Mg(2+) serves as cofactor.

The enzyme catalyses (2R)-2,3-dihydroxy-3-methylbutanoate = 3-methyl-2-oxobutanoate + H2O. The catalysed reaction is (2R,3R)-2,3-dihydroxy-3-methylpentanoate = (S)-3-methyl-2-oxopentanoate + H2O. It participates in amino-acid biosynthesis; L-isoleucine biosynthesis; L-isoleucine from 2-oxobutanoate: step 3/4. Its pathway is amino-acid biosynthesis; L-valine biosynthesis; L-valine from pyruvate: step 3/4. In terms of biological role, functions in the biosynthesis of branched-chain amino acids. Catalyzes the dehydration of (2R,3R)-2,3-dihydroxy-3-methylpentanoate (2,3-dihydroxy-3-methylvalerate) into 2-oxo-3-methylpentanoate (2-oxo-3-methylvalerate) and of (2R)-2,3-dihydroxy-3-methylbutanoate (2,3-dihydroxyisovalerate) into 2-oxo-3-methylbutanoate (2-oxoisovalerate), the penultimate precursor to L-isoleucine and L-valine, respectively. In Brucella abortus (strain S19), this protein is Dihydroxy-acid dehydratase.